The sequence spans 606 residues: NADH-ubiquinone oxidoreductase chain 5 (606 aa).

14 helical membrane-spanning segments follow: residues 1 to 21 (MNMF…PIIM), 43 to 63 (AFMI…ETII), 87 to 107 (MIFV…SMWY), 117 to 137 (FFKY…ANNM), 140 to 160 (LFIG…WWYG), 171 to 191 (AVLY…WFLL), 241 to 261 (TPVS…FLLI), 273 to 293 (IQTL…ICAL), 310 to 330 (LGLM…LHIC), 365 to 385 (VLPF…GMPF), 409 to 429 (LLIT…IMFF), 457 to 477 (LLIG…PTTI), 488 to 508 (MTAL…NLTT), and 582 to 602 (GLIK…LLIL).

It belongs to the complex I subunit 5 family. Core subunit of respiratory chain NADH dehydrogenase (Complex I) which is composed of 45 different subunits.

Its subcellular location is the mitochondrion inner membrane. It catalyses the reaction a ubiquinone + NADH + 5 H(+)(in) = a ubiquinol + NAD(+) + 4 H(+)(out). Functionally, core subunit of the mitochondrial membrane respiratory chain NADH dehydrogenase (Complex I) which catalyzes electron transfer from NADH through the respiratory chain, using ubiquinone as an electron acceptor. Essential for the catalytic activity and assembly of complex I. The protein is NADH-ubiquinone oxidoreductase chain 5 (MT-ND5) of Canis lupus (Gray wolf).